The primary structure comprises 121 residues: MRKSYRIKSEQDFQTVFENGESVANRAFVIYVLPRKQNKHFRVGISVGKKVGHTAVVRNRLKRYIRAVLTENRDRIAPDLDFLVIARPYAHDFDWEKTRENLLHALNLAHVIEEMPNKEEK.

The protein belongs to the RnpA family. Consists of a catalytic RNA component (M1 or rnpB) and a protein subunit.

It carries out the reaction Endonucleolytic cleavage of RNA, removing 5'-extranucleotides from tRNA precursor.. Its function is as follows. RNaseP catalyzes the removal of the 5'-leader sequence from pre-tRNA to produce the mature 5'-terminus. It can also cleave other RNA substrates such as 4.5S RNA. The protein component plays an auxiliary but essential role in vivo by binding to the 5'-leader sequence and broadening the substrate specificity of the ribozyme. The protein is Ribonuclease P protein component of Lactobacillus delbrueckii subsp. bulgaricus (strain ATCC 11842 / DSM 20081 / BCRC 10696 / JCM 1002 / NBRC 13953 / NCIMB 11778 / NCTC 12712 / WDCM 00102 / Lb 14).